The chain runs to 82 residues: Small ribosomal subunit protein uS17 (82 aa).

Belongs to the universal ribosomal protein uS17 family. In terms of assembly, part of the 30S ribosomal subunit.

One of the primary rRNA binding proteins, it binds specifically to the 5'-end of 16S ribosomal RNA. In Sulfurimonas denitrificans (strain ATCC 33889 / DSM 1251) (Thiomicrospira denitrificans (strain ATCC 33889 / DSM 1251)), this protein is Small ribosomal subunit protein uS17.